A 377-amino-acid chain; its full sequence is Putative zinc metalloprotease Atu1380 (377 aa).

A Zn(2+)-binding site is contributed by H29. The active site involves E30. Residue H33 coordinates Zn(2+). Helical transmembrane passes span 118–140 (VAAG…FGIY), 299–321 (LGIS…LNLM), and 351–373 (VAFR…NDIS). The 74-residue stretch at 129–202 (AILIFAVLFG…TPITVTVERA (74 aa)) folds into the PDZ domain.

It belongs to the peptidase M50B family. It depends on Zn(2+) as a cofactor.

It localises to the cell inner membrane. The sequence is that of Putative zinc metalloprotease Atu1380 from Agrobacterium fabrum (strain C58 / ATCC 33970) (Agrobacterium tumefaciens (strain C58)).